The sequence spans 209 residues: Inorganic pyrophosphatase (209 aa).

3 residues coordinate substrate: Lys38, Arg52, and Tyr64. Mg(2+) contacts are provided by Asp92, Asp97, and Asp130. Tyr167 is a binding site for substrate.

Belongs to the PPase family. Homohexamer. It depends on Mg(2+) as a cofactor.

Its subcellular location is the cytoplasm. The catalysed reaction is diphosphate + H2O = 2 phosphate + H(+). Its function is as follows. Catalyzes the hydrolysis of inorganic pyrophosphate (PPi) forming two phosphate ions. The sequence is that of Inorganic pyrophosphatase from Chlamydia muridarum (strain MoPn / Nigg).